We begin with the raw amino-acid sequence, 125 residues long: Photosystem II extrinsic protein U (125 aa).

Positions 1–29 (MKRLLSWLTGLVVMAGLLFSLATPSGVQA) are cleaved as a signal peptide.

The protein belongs to the PsbU family. PSII is composed of 1 copy each of membrane proteins PsbA, PsbB, PsbC, PsbD, PsbE, PsbF, PsbH, PsbI, PsbJ, PsbK, PsbL, PsbM, PsbT, PsbX, PsbY, PsbZ, Psb30/Ycf12, peripheral proteins PsbO, CyanoQ (PsbQ), PsbU, PsbV and a large number of cofactors. It forms dimeric complexes.

Its subcellular location is the cellular thylakoid membrane. One of the extrinsic, lumenal subunits of photosystem II (PSII). PSII is a light-driven water plastoquinone oxidoreductase, using light energy to abstract electrons from H(2)O, generating a proton gradient subsequently used for ATP formation. The extrinsic proteins stabilize the structure of photosystem II oxygen-evolving complex (OEC), the ion environment of oxygen evolution and protect the OEC against heat-induced inactivation. This Synechococcus sp. (strain WH7803) protein is Photosystem II extrinsic protein U.